The chain runs to 191 residues: Ribosome maturation factor RimM (191 aa).

Residues 114-191 (EDEYYWVDLI…RIVVDWQPDY (78 aa)) enclose the PRC barrel domain.

This sequence belongs to the RimM family. Binds ribosomal protein uS19.

Its subcellular location is the cytoplasm. In terms of biological role, an accessory protein needed during the final step in the assembly of 30S ribosomal subunit, possibly for assembly of the head region. Essential for efficient processing of 16S rRNA. May be needed both before and after RbfA during the maturation of 16S rRNA. It has affinity for free ribosomal 30S subunits but not for 70S ribosomes. The protein is Ribosome maturation factor RimM of Paracidovorax citrulli (strain AAC00-1) (Acidovorax citrulli).